The sequence spans 348 residues: DNA-directed RNA polymerase subunit alpha (348 aa).

An alpha N-terminal domain (alpha-NTD) region spans residues 1–243; sequence MLIKQGDRLI…DQISVFINFD (243 aa). The segment at 260–348 is alpha C-terminal domain (alpha-CTD); sequence VNENLFKGID…WLKRKQQNEA (89 aa).

The protein belongs to the RNA polymerase alpha chain family. As to quaternary structure, homodimer. The RNAP catalytic core consists of 2 alpha, 1 beta, 1 beta' and 1 omega subunit. When a sigma factor is associated with the core the holoenzyme is formed, which can initiate transcription.

The catalysed reaction is RNA(n) + a ribonucleoside 5'-triphosphate = RNA(n+1) + diphosphate. In terms of biological role, DNA-dependent RNA polymerase catalyzes the transcription of DNA into RNA using the four ribonucleoside triphosphates as substrates. The sequence is that of DNA-directed RNA polymerase subunit alpha from Oleidesulfovibrio alaskensis (strain ATCC BAA-1058 / DSM 17464 / G20) (Desulfovibrio alaskensis).